Here is a 662-residue protein sequence, read N- to C-terminus: Bifunctional polymyxin resistance protein ArnA (662 aa).

Positions 1–307 (MTSKAVVFAY…ELGLVEGARL (307 aa)) are formyltransferase ArnAFT. Catalysis depends on His-106, which acts as the Proton donor; for formyltransferase activity. (6R)-10-formyltetrahydrofolate is bound by residues Arg-116 and 138 to 142 (IERAD). Positions 316 to 662 (RRTRVLILGV…EALREREAQA (347 aa)) are dehydrogenase ArnADH. NAD(+) is bound by residues Asp-349 and 370–371 (DI). Residues Ala-395, Tyr-400, and 434 to 435 (TS) contribute to the UDP-alpha-D-glucuronate site. The active-site Proton acceptor; for decarboxylase activity is the Glu-436. UDP-alpha-D-glucuronate is bound by residues Arg-462, Asn-493, 527-536 (RLVDGGAQKR), and Tyr-614. Catalysis depends on Arg-620, which acts as the Proton donor; for decarboxylase activity.

It in the N-terminal section; belongs to the Fmt family. UDP-L-Ara4N formyltransferase subfamily. This sequence in the C-terminal section; belongs to the NAD(P)-dependent epimerase/dehydratase family. UDP-glucuronic acid decarboxylase subfamily. As to quaternary structure, homohexamer, formed by a dimer of trimers.

It carries out the reaction UDP-alpha-D-glucuronate + NAD(+) = UDP-beta-L-threo-pentopyranos-4-ulose + CO2 + NADH. The enzyme catalyses UDP-4-amino-4-deoxy-beta-L-arabinose + (6R)-10-formyltetrahydrofolate = UDP-4-deoxy-4-formamido-beta-L-arabinose + (6S)-5,6,7,8-tetrahydrofolate + H(+). It participates in nucleotide-sugar biosynthesis; UDP-4-deoxy-4-formamido-beta-L-arabinose biosynthesis; UDP-4-deoxy-4-formamido-beta-L-arabinose from UDP-alpha-D-glucuronate: step 1/3. The protein operates within nucleotide-sugar biosynthesis; UDP-4-deoxy-4-formamido-beta-L-arabinose biosynthesis; UDP-4-deoxy-4-formamido-beta-L-arabinose from UDP-alpha-D-glucuronate: step 3/3. It functions in the pathway bacterial outer membrane biogenesis; lipopolysaccharide biosynthesis. Functionally, bifunctional enzyme that catalyzes the oxidative decarboxylation of UDP-glucuronic acid (UDP-GlcUA) to UDP-4-keto-arabinose (UDP-Ara4O) and the addition of a formyl group to UDP-4-amino-4-deoxy-L-arabinose (UDP-L-Ara4N) to form UDP-L-4-formamido-arabinose (UDP-L-Ara4FN). The modified arabinose is attached to lipid A and is required for resistance to polymyxin and cationic antimicrobial peptides. This chain is Bifunctional polymyxin resistance protein ArnA, found in Pseudomonas aeruginosa (strain ATCC 15692 / DSM 22644 / CIP 104116 / JCM 14847 / LMG 12228 / 1C / PRS 101 / PAO1).